Here is a 398-residue protein sequence, read N- to C-terminus: Dual-specificity RNA methyltransferase RlmN (398 aa).

Residue Glu119 is the Proton acceptor of the active site. Positions 125–364 (EGDRATLCVS…TIVRKTRGDD (240 aa)) constitute a Radical SAM core domain. A disulfide bond links Cys132 and Cys369. 3 residues coordinate [4Fe-4S] cluster: Cys139, Cys143, and Cys146. Residues 193–194 (GE), Ser225, 247–249 (SLH), and Asn326 each bind S-adenosyl-L-methionine. The S-methylcysteine intermediate role is filled by Cys369.

This sequence belongs to the radical SAM superfamily. RlmN family. It depends on [4Fe-4S] cluster as a cofactor.

It is found in the cytoplasm. The catalysed reaction is adenosine(2503) in 23S rRNA + 2 reduced [2Fe-2S]-[ferredoxin] + 2 S-adenosyl-L-methionine = 2-methyladenosine(2503) in 23S rRNA + 5'-deoxyadenosine + L-methionine + 2 oxidized [2Fe-2S]-[ferredoxin] + S-adenosyl-L-homocysteine. It carries out the reaction adenosine(37) in tRNA + 2 reduced [2Fe-2S]-[ferredoxin] + 2 S-adenosyl-L-methionine = 2-methyladenosine(37) in tRNA + 5'-deoxyadenosine + L-methionine + 2 oxidized [2Fe-2S]-[ferredoxin] + S-adenosyl-L-homocysteine. Functionally, specifically methylates position 2 of adenine 2503 in 23S rRNA and position 2 of adenine 37 in tRNAs. m2A2503 modification seems to play a crucial role in the proofreading step occurring at the peptidyl transferase center and thus would serve to optimize ribosomal fidelity. This chain is Dual-specificity RNA methyltransferase RlmN, found in Yersinia enterocolitica serotype O:8 / biotype 1B (strain NCTC 13174 / 8081).